An 809-amino-acid polypeptide reads, in one-letter code: MAYEASLIEKKWQKIWDENEYFEPKDDLNLPKKYILSMFPYPSGRIHMGHVRNYTIGDALARYYRKIGFNVLHPIGFDSFGMPAENAAIKHKIHPKSWTYENIAYMKKELFSLGFSFSKKRMLATSDPLYTKFEQEIFIKMFEKGLIYTKEANVNWCEQDQTVLANEQVEDGKCWRCGHEVVQKKMPGYYVKITAYAEKLLKDLEGLRDKWPNQVLTMQENWIGKSEGLAFSLNLDEKSKQKAKESSLEVFTTRADTIYGVSYVALAPEHKIVQNLLLQNLLNQDVLNKIKAIQNQSPRERQSSEKEGYFLGIYAIHPLSGEKIPLWVANFVLSDYGSGAVMAVPAHDERDFEFAKKYNLAIKQVIQTQENLPYTQKLGKLIHSQEFDNLDCNEARLKIISQFEAKNIGKRVVNFKIRDWGVSRQRYWGAPIPMIKCQSCGIAPQKLENLPITLPEDVQITGEGNPLDKHPTWKNCICPKCGKEAQKESDTLDTFFESSWYFARFASDEKTWQEKALDEKSVKYWMSVDQYIGGIEHAILHLLYARFFQKALRDLGYLTQNEPFDRLLTQGMVLKDGAKMSKSKGNVVDPDEIIEKYGADTARLFMLFAAPPAKELEWNDDAVEGAYRFICKLYDRAQNIKKGELVELKQENLNKEEKYARLKVYEALKKSEEVYHQSFAFNTLIAACMEALNALALCKNEALEQEAFYIILNILEPIIPHVCFELSEELFKCKNFKKLELKEEVFVKDTLNLAVSINGKKRAEFKISSSASKEEILAFAKENTAKWLEGKSIVKEIYVEGKLVNLVIK.

The short motif at Pro40–His50 is the 'HIGH' region element. The 'KMSKS' region motif lies at Lys579 to Ser583. Position 582 (Lys582) interacts with ATP.

The protein belongs to the class-I aminoacyl-tRNA synthetase family.

It localises to the cytoplasm. The catalysed reaction is tRNA(Leu) + L-leucine + ATP = L-leucyl-tRNA(Leu) + AMP + diphosphate. This is Leucine--tRNA ligase from Campylobacter jejuni subsp. doylei (strain ATCC BAA-1458 / RM4099 / 269.97).